A 116-amino-acid polypeptide reads, in one-letter code: Large ribosomal subunit protein bL20 (116 aa).

Belongs to the bacterial ribosomal protein bL20 family.

Binds directly to 23S ribosomal RNA and is necessary for the in vitro assembly process of the 50S ribosomal subunit. It is not involved in the protein synthesizing functions of that subunit. The sequence is that of Large ribosomal subunit protein bL20 from Desulfatibacillum aliphaticivorans.